Here is a 502-residue protein sequence, read N- to C-terminus: Smr domain-containing protein C1235.03 (502 aa).

The disordered stretch occupies residues 150–184 (LITSNIGHRSRQRKKKTKKATNSRKPLSKFQSNTE). Residues 157 to 171 (HRSRQRKKKTKKATN) are compositionally biased toward basic residues. One can recognise a Smr domain in the interval 411-459 (SLDLHGATVREAKTIVRERVAAWWAKEADTSPNSIRPFVIVTGRGNHSI).

Its subcellular location is the nucleus. It localises to the nucleolus. The chain is Smr domain-containing protein C1235.03 from Schizosaccharomyces pombe (strain 972 / ATCC 24843) (Fission yeast).